The primary structure comprises 136 residues: MACCATSFCGFPTCSTGGSSCCQPTCTQSSCCQPSCCEASCCQPSCCETGFGGGIGCGQEGGSGGVSCRVRWCRPDCRVEGTCLPPCCVVSCTPPTCCQLHHAQASCCRPSYCGQSCCRPACCCYCCQPSCSEPSC.

11 consecutive repeat copies span residues 3–7 (CCATS), 21–25 (CCQPT), 31–35 (CCQPS), 36–40 (CCEAS), 41–45 (CCQPS), 46–50 (CCETG), 87–91 (CCVVS), 97–101 (CCQLH), 107–111 (CCRPS), 117–121 (CCRPA), and 126–130 (CCQPS). Residues 21-130 (CCQPTCTQSS…ACCCYCCQPS (110 aa)) form an 11 X 5 AA repeats of C-C-[AEQVR]-[ALPTV]-[AGHST] region.

It belongs to the KRTAP type 9 family. In terms of assembly, interacts with hair keratins.

In the hair cortex, hair keratin intermediate filaments are embedded in an interfilamentous matrix, consisting of hair keratin-associated proteins (KRTAP), which are essential for the formation of a rigid and resistant hair shaft through their extensive disulfide bond cross-linking with abundant cysteine residues of hair keratins. The matrix proteins include the high-sulfur and high-glycine-tyrosine keratins. The sequence is that of Keratin-associated protein 9-3 from Mus musculus (Mouse).